A 235-amino-acid polypeptide reads, in one-letter code: Small ribosomal subunit protein mS23 (235 aa).

The disordered stretch occupies residues Pro-51–Asn-71.

This sequence belongs to the mitochondrion-specific ribosomal protein mS23 family. In terms of assembly, component of the mitochondrial small ribosomal subunit.

Its subcellular location is the mitochondrion. In Chaetomium globosum (strain ATCC 6205 / CBS 148.51 / DSM 1962 / NBRC 6347 / NRRL 1970) (Soil fungus), this protein is Small ribosomal subunit protein mS23 (RSM25).